The primary structure comprises 385 residues: Fe-S cluster assembly protein DRE2 (385 aa).

The interval 1 to 177 (MTSSINILLL…KKLNKNDMTI (177 aa)) is N-terminal SAM-like domain. The segment at 178 to 240 (NVPQEIDNIT…NDLLKYNNHN (63 aa)) is linker. The segment at 200-226 (YFSSDDENSSDGSLSDNANEEEEDDDE) is disordered. Residues 217 to 226 (ANEEEEDDDE) show a composition bias toward acidic residues. Cys-261, Cys-275, Cys-278, and Cys-280 together coordinate [2Fe-2S] cluster. The segment at 261 to 280 (CELSLNGGKKRKKACKDCTC) is fe-S binding site A. [4Fe-4S] cluster contacts are provided by Cys-348, Cys-351, Cys-359, and Cys-362. 2 consecutive short sequence motifs (cx2C motif) follow at residues 348–351 (CGSC) and 359–362 (CDGC). The tract at residues 348–362 (CGSCALGDAFRCDGC) is fe-S binding site B.

This sequence belongs to the anamorsin family. In terms of assembly, monomer. Interacts with TAH18. Interacts with MIA40. The cofactor is [2Fe-2S] cluster. It depends on [4Fe-4S] cluster as a cofactor.

The protein resides in the cytoplasm. It localises to the mitochondrion intermembrane space. Component of the cytosolic iron-sulfur (Fe-S) protein assembly (CIA) machinery required for the maturation of extramitochondrial Fe-S proteins. Part of an electron transfer chain functioning in an early step of cytosolic Fe-S biogenesis, facilitating the de novo assembly of a [4Fe-4S] cluster on the scaffold complex CFD1-NBP35. Electrons are transferred to DRE2 from NADPH via the FAD- and FMN-containing protein TAH18. TAH18-DRE2 are also required for the assembly of the diferric tyrosyl radical cofactor of ribonucleotide reductase (RNR), probably by providing electrons for reduction during radical cofactor maturation in the catalytic small subunit RNR2. The polypeptide is Fe-S cluster assembly protein DRE2 (Candida dubliniensis (strain CD36 / ATCC MYA-646 / CBS 7987 / NCPF 3949 / NRRL Y-17841) (Yeast)).